Here is a 262-residue protein sequence, read N- to C-terminus: Phosphatidylserine decarboxylase proenzyme (262 aa).

Active-site charge relay system; for autoendoproteolytic cleavage activity residues include Asp86, His142, and Ser226. The active-site Schiff-base intermediate with substrate; via pyruvic acid; for decarboxylase activity is the Ser226. A Pyruvic acid (Ser); by autocatalysis modification is found at Ser226.

It belongs to the phosphatidylserine decarboxylase family. PSD-B subfamily. Prokaryotic type I sub-subfamily. As to quaternary structure, heterodimer of a large membrane-associated beta subunit and a small pyruvoyl-containing alpha subunit. Pyruvate serves as cofactor. In terms of processing, is synthesized initially as an inactive proenzyme. Formation of the active enzyme involves a self-maturation process in which the active site pyruvoyl group is generated from an internal serine residue via an autocatalytic post-translational modification. Two non-identical subunits are generated from the proenzyme in this reaction, and the pyruvate is formed at the N-terminus of the alpha chain, which is derived from the carboxyl end of the proenzyme. The autoendoproteolytic cleavage occurs by a canonical serine protease mechanism, in which the side chain hydroxyl group of the serine supplies its oxygen atom to form the C-terminus of the beta chain, while the remainder of the serine residue undergoes an oxidative deamination to produce ammonia and the pyruvoyl prosthetic group on the alpha chain. During this reaction, the Ser that is part of the protease active site of the proenzyme becomes the pyruvoyl prosthetic group, which constitutes an essential element of the active site of the mature decarboxylase.

The protein localises to the cell membrane. It carries out the reaction a 1,2-diacyl-sn-glycero-3-phospho-L-serine + H(+) = a 1,2-diacyl-sn-glycero-3-phosphoethanolamine + CO2. It functions in the pathway phospholipid metabolism; phosphatidylethanolamine biosynthesis; phosphatidylethanolamine from CDP-diacylglycerol: step 2/2. In terms of biological role, catalyzes the formation of phosphatidylethanolamine (PtdEtn) from phosphatidylserine (PtdSer). This Bacillus cereus (strain ATCC 10987 / NRS 248) protein is Phosphatidylserine decarboxylase proenzyme.